Here is a 623-residue protein sequence, read N- to C-terminus: NADPH-dependent diflavin oxidoreductase 1 (623 aa).

Positions 7–168 (IVILYGSETG…VYFEYEKKVL (162 aa)) constitute a Flavodoxin-like domain. FMN is bound by residues 13 to 18 (SETGNA), 60 to 63 (STTG), 106 to 115 (LGDSSYPKFN), and Asp142. The 268-residue stretch at 224–491 (ESLKVGRVNI…VGPGVGLAPL (268 aa)) folds into the FAD-binding FR-type domain. FAD contacts are provided by residues Arg383, 413–416 (RYYS), and 445–448 (GICT). 538–539 (SR) is a binding site for NADP(+). An FAD-binding site is contributed by Trp623.

This sequence belongs to the NADPH-dependent diflavin oxidoreductase NDOR1 family. In the N-terminal section; belongs to the flavodoxin family. The protein in the C-terminal section; belongs to the flavoprotein pyridine nucleotide cytochrome reductase family. As to quaternary structure, interacts with DRE2; as part of the cytosolic iron-sulfur (Fe-S) protein assembly (CIA) machinery. Requires FAD as cofactor. It depends on FMN as a cofactor.

It is found in the cytoplasm. The protein resides in the mitochondrion. It carries out the reaction 2 oxidized [2Fe-2S]-[protein] + NADPH = 2 reduced [2Fe-2S]-[protein] + NADP(+) + H(+). Its function is as follows. NADPH-dependent reductase which is a central component of the cytosolic iron-sulfur (Fe-S) protein assembly (CIA) machinery. Transfers electrons from NADPH via its FAD and FMN prosthetic groups to the [2Fe-2S] cluster of DRE2, another key component of the CIA machinery. In turn, this reduced cluster provides electrons for assembly of cytosolic iron-sulfur cluster proteins. Positively controls H(2)O(2)-induced cell death. This is NADPH-dependent diflavin oxidoreductase 1 from Saccharomyces cerevisiae (strain ATCC 204508 / S288c) (Baker's yeast).